The primary structure comprises 1397 residues: Ankyrin repeat domain-containing protein 30A (1397 aa).

ANK repeat units lie at residues 72 to 101 (QKRTALHWACVNGHEEVVTFLVDRKCQLDV), 105 to 134 (EHRTPLMKALQCHQEACANILIDSGADINL), 138 to 167 (YGNTALHYAVYSEILSVVAKLLSHGAVIEV), 171 to 200 (ASLTPLLLSITKRSEQIVEFLLIKNANANA), 204 to 233 (YKCTALMLAVCHGSSEIVGMLLQQNVDVFA), and 237 to 271 (CGVTAEHYAVTCGFHHIHEQIMEYIRKLSKNHQNT). The span at 267-279 (NHQNTNPEGTSAG) shows a compositional bias: polar residues. 4 disordered regions span residues 267–376 (NHQN…TWPA), 453–482 (PTKESSTKASANDQRFPSESKQEEDEEYSC), 782–807 (QTLRADEILPSESKQKDYEESSWDSE), and 902–931 (TLRADQMFPSESKQKKVEENSWDSESLRET). Basic and acidic residues-rich tracts occupy residues 290-304 (RTPDTAESLVEKTPD) and 312-326 (RTPDTAESLVEKTPD). The span at 455–467 (KESSTKASANDQR) shows a compositional bias: polar residues. Composition is skewed to basic and acidic residues over residues 782-800 (QTLRADEILPSESKQKDYE) and 913-931 (SKQKKVEENSWDSESLRET). Coiled coils occupy residues 998-1188 (VLKK…KQDK) and 1282-1327 (EHAQ…FQLQ).

In terms of tissue distribution, mainly expressed in breast and testis. A very faint signal is detected in placenta. Also expressed in many breast cancer cells.

The chain is Ankyrin repeat domain-containing protein 30A (ANKRD30A) from Homo sapiens (Human).